Reading from the N-terminus, the 220-residue chain is UPF0319 protein YccT (220 aa).

The first 20 residues, 1 to 20 (MKTGALTTFLALCLPVTVFA), serve as a signal peptide directing secretion.

The protein belongs to the UPF0319 family.

In Salmonella choleraesuis (strain SC-B67), this protein is UPF0319 protein YccT.